A 239-amino-acid polypeptide reads, in one-letter code: Ribonuclease PH (239 aa).

Residues arginine 86 and 124–126 (GTR) each bind phosphate.

This sequence belongs to the RNase PH family. Homohexameric ring arranged as a trimer of dimers.

The enzyme catalyses tRNA(n+1) + phosphate = tRNA(n) + a ribonucleoside 5'-diphosphate. In terms of biological role, phosphorolytic 3'-5' exoribonuclease that plays an important role in tRNA 3'-end maturation. Removes nucleotide residues following the 3'-CCA terminus of tRNAs; can also add nucleotides to the ends of RNA molecules by using nucleoside diphosphates as substrates, but this may not be physiologically important. Probably plays a role in initiation of 16S rRNA degradation (leading to ribosome degradation) during starvation. The chain is Ribonuclease PH from Rhizobium leguminosarum bv. trifolii (strain WSM2304).